The primary structure comprises 658 residues: Biosynthetic arginine decarboxylase (658 aa).

An N6-(pyridoxal phosphate)lysine modification is found at Lys-127. Residue 307 to 317 (FDVGGGLGVDY) participates in substrate binding.

The protein belongs to the Orn/Lys/Arg decarboxylase class-II family. SpeA subfamily. The cofactor is Mg(2+). It depends on pyridoxal 5'-phosphate as a cofactor.

It carries out the reaction L-arginine + H(+) = agmatine + CO2. Its pathway is amine and polyamine biosynthesis; agmatine biosynthesis; agmatine from L-arginine: step 1/1. Catalyzes the biosynthesis of agmatine from arginine. In Salmonella typhi, this protein is Biosynthetic arginine decarboxylase.